Reading from the N-terminus, the 444-residue chain is Phosphoglucosamine mutase (444 aa).

Serine 101 functions as the Phosphoserine intermediate in the catalytic mechanism. Residues serine 101, aspartate 240, aspartate 242, and aspartate 244 each contribute to the Mg(2+) site. At serine 101 the chain carries Phosphoserine.

Belongs to the phosphohexose mutase family. Mg(2+) serves as cofactor. Activated by phosphorylation.

The enzyme catalyses alpha-D-glucosamine 1-phosphate = D-glucosamine 6-phosphate. Functionally, catalyzes the conversion of glucosamine-6-phosphate to glucosamine-1-phosphate. This Aeromonas salmonicida (strain A449) protein is Phosphoglucosamine mutase.